Reading from the N-terminus, the 505-residue chain is Probable Xaa-Pro aminopeptidase Pc16g13390 (505 aa).

Residues aspartate 287, aspartate 298, glutamate 436, and glutamate 475 each coordinate Mn(2+).

Belongs to the peptidase M24B family. The cofactor is Mn(2+).

The enzyme catalyses Release of any N-terminal amino acid, including proline, that is linked to proline, even from a dipeptide or tripeptide.. In terms of biological role, catalyzes the removal of a penultimate prolyl residue from the N-termini of peptides. This is Probable Xaa-Pro aminopeptidase Pc16g13390 from Penicillium rubens (strain ATCC 28089 / DSM 1075 / NRRL 1951 / Wisconsin 54-1255) (Penicillium chrysogenum).